The primary structure comprises 159 residues: Putative transmembrane protein ORF159 (159 aa).

A run of 2 helical transmembrane segments spans residues 20-40 (LLLS…LSLF) and 59-79 (IIAV…GFCC). The short motif at 106-108 (RGD) is the Cell attachment site element.

Its subcellular location is the host membrane. The protein is Putative transmembrane protein ORF159 of Acidianus sp. F28 (AFV-2).